We begin with the raw amino-acid sequence, 273 residues long: NADPH-dependent 7-cyano-7-deazaguanine reductase (273 aa).

Position 81–83 (Val-81–Ser-83) interacts with substrate. Ser-83–Lys-84 is a binding site for NADPH. Cys-179 serves as the catalytic Thioimide intermediate. Residue Asp-186 is the Proton donor of the active site. Ala-218–Glu-219 serves as a coordination point for substrate. Position 247-248 (Arg-247–Gly-248) interacts with NADPH.

This sequence belongs to the GTP cyclohydrolase I family. QueF type 2 subfamily. As to quaternary structure, homodimer.

It localises to the cytoplasm. It catalyses the reaction 7-aminomethyl-7-carbaguanine + 2 NADP(+) = 7-cyano-7-deazaguanine + 2 NADPH + 3 H(+). It participates in tRNA modification; tRNA-queuosine biosynthesis. Functionally, catalyzes the NADPH-dependent reduction of 7-cyano-7-deazaguanine (preQ0) to 7-aminomethyl-7-deazaguanine (preQ1). In Rickettsia bellii (strain OSU 85-389), this protein is NADPH-dependent 7-cyano-7-deazaguanine reductase.